We begin with the raw amino-acid sequence, 1790 residues long: Cytokinesis protein sepA (1790 aa).

Disordered regions lie at residues 1-275 (MPTS…YLTR) and 328-350 (GEQK…GILE). Residues 24–35 (ERPVEDRWDAHG) show a composition bias toward basic and acidic residues. Composition is skewed to low complexity over residues 39-62 (SLAP…SIQS) and 187-203 (SHHS…SRMS). Residues 205–236 (DQASIHSSLSSNTRGSSYISTDGSSRTTLPSH) are compositionally biased toward polar residues. The GBD/FH3 domain maps to 274–702 (TRPRDDRVVD…YVAMDRRLPD (429 aa)). Basic and acidic residues predominate over residues 328–341 (GEQKRKQKARETHG). The stretch at 724 to 811 (AEARRAYDES…QRNELETREL (88 aa)) forms a coiled coil. The region spanning 955-1136 (DPEQATGLLG…NYLASQGAPS (182 aa)) is the FH1 domain. Residues 975–986 (ADDAKDEGKPTE) are compositionally biased toward basic and acidic residues. Disordered regions lie at residues 975-1119 (ADDA…PPGT), 1465-1484 (NLSD…ITQR), and 1596-1790 (RAAA…PSTS). Composition is skewed to pro residues over residues 1015–1026 (APPPPPPPPPAH) and 1033–1118 (APPP…PPPG). In terms of domain architecture, FH2 spans 1141–1564 (VMSSIRPKKK…TEASLARKRI (424 aa)). A coiled-coil region spans residues 1435–1566 (LQKLNVDQLR…ASLARKRINV (132 aa)). The region spanning 1581 to 1613 (SPATSGAMDSLLEKLRAAAPQAKDQRDRRRRAR) is the DAD domain. The segment covering 1608–1620 (RRRRARLKERHQV) has biased composition (basic residues). Over residues 1644–1661 (SGATDTNATDSSLLSPTI) the composition is skewed to polar residues. The segment covering 1694-1710 (PDPERTRRRRESAEEER) has biased composition (basic and acidic residues). Polar residues predominate over residues 1720-1746 (GATSGSKDSNDTTPLSPVTEPTSTQGE).

The protein belongs to the formin homology family. BNI1 subfamily.

In terms of biological role, involved in cytokinesis. Overexpression results in growth inhibition. This chain is Cytokinesis protein sepA (sepA), found in Emericella nidulans (strain FGSC A4 / ATCC 38163 / CBS 112.46 / NRRL 194 / M139) (Aspergillus nidulans).